The sequence spans 248 residues: Carbohydrate deacetylase 2 (248 aa).

Residues His-59 and His-123 each contribute to the Mg(2+) site.

It belongs to the YdjC deacetylase family. As to quaternary structure, homodimer. Requires Mg(2+) as cofactor.

In terms of biological role, probably catalyzes the deacetylation of acetylated carbohydrates an important step in the degradation of oligosaccharides. The sequence is that of Carbohydrate deacetylase 2 from Listeria innocua serovar 6a (strain ATCC BAA-680 / CLIP 11262).